We begin with the raw amino-acid sequence, 646 residues long: Calcium-dependent protein kinase 2 (646 aa).

G2 carries N-myristoyl glycine lipidation. Residue C5 is the site of S-palmitoyl cysteine attachment. The tract at residues R27–L169 is disordered. Polar residues predominate over residues Q32–V43. 2 stretches are compositionally biased toward basic and acidic residues: residues P73–V119 and A126–K157. The Protein kinase domain maps to Y186 to V444. ATP contacts are provided by residues L192 to T200 and K215. Catalysis depends on D310, which acts as the Proton acceptor. Residue S350 is modified to Phosphoserine. Residues A450–I480 are autoinhibitory domain. 4 EF-hand domains span residues E487–N522, L523–I558, E559–G592, and V593–M628. 19 residues coordinate Ca(2+): D500, D502, S504, Q506, E511, D536, D538, S540, T542, E547, D572, D574, S576, E583, D606, D608, D610, R612, and E617.

The protein belongs to the protein kinase superfamily. Ser/Thr protein kinase family. CDPK subfamily. Interacts with 14-3-3 proteins.

It localises to the endoplasmic reticulum membrane. The enzyme catalyses L-seryl-[protein] + ATP = O-phospho-L-seryl-[protein] + ADP + H(+). It carries out the reaction L-threonyl-[protein] + ATP = O-phospho-L-threonyl-[protein] + ADP + H(+). Activated by calcium. Autophosphorylation may play an important role in the regulation of the kinase activity. Its function is as follows. May play a role in signal transduction pathways that involve calcium as a second messenger. The chain is Calcium-dependent protein kinase 2 (CPK2) from Arabidopsis thaliana (Mouse-ear cress).